The sequence spans 109 residues: Red pigment-concentrating prohormone (109 aa).

An N-terminal signal peptide occupies residues 1–25; that stretch reads MVRRSGVTLLVVALLVVTLMSSVSA. Q26 is subject to Pyrrolidone carboxylic acid. W33 carries the post-translational modification Tryptophan amide. Positions 34-78 are disordered; sequence GKRAAGASGSNGGVGEAVSGLHPSVGGAPGGVVPPGSSSPGDSCG. Low complexity-rich tracts occupy residues 49–59 and 67–78; these read EAVSGLHPSVG and PPGSSSPGDSCG.

The protein belongs to the AKH/HRTH/RPCH family.

It localises to the secreted. Its function is as follows. This hormone adapts the animal to light backgrounds by stimulating concentration of the pigment of its red body-chromatophores. In Callinectes sapidus (Blue crab), this protein is Red pigment-concentrating prohormone.